A 346-amino-acid polypeptide reads, in one-letter code: Annexin A1 (346 aa).

N-acetylalanine is present on Ala2. Position 5 is a phosphoserine; by TRPM7 (Ser5). An Isoglutamyl lysine isopeptide (Gln-Lys) (interchain with K-?) cross-link involves residue Gln19. Tyr21 bears the Phosphotyrosine; by EGFR mark. At Ser27 the chain carries Phosphoserine; by PKC. A phosphoserine mark is found at Ser34 and Ser37. Thr41 carries the phosphothreonine modification. Annexin repeat units follow at residues 42-113 (FNPS…ALLK), 114-185 (TPAQ…SLAK), 197-269 (DLAD…AIVK), and 273-344 (SKPA…ALCG). Lys58 is subject to N6-acetyllysine. Ca(2+) is bound by residues Gly59, Val60, Glu62, Lys97, Leu100, Glu105, Met127, Gly129, Gly131, Thr132, and Glu134. At Thr136 the chain carries Phosphothreonine. Residues Asp171, Gly210, and Arg213 each contribute to the Ca(2+) site. Lys214 is covalently cross-linked (Glycyl lysine isopeptide (Lys-Gly) (interchain with G-Cter in SUMO1); alternate). A Glycyl lysine isopeptide (Lys-Gly) (interchain with G-Cter in SUMO2); alternate cross-link involves residue Lys214. Gly215 contacts Ca(2+). Residue Lys239 is modified to N6-acetyllysine. Residues Asp253, Glu255, and Leu256 each coordinate Ca(2+). Residue Lys257 forms a Glycyl lysine isopeptide (Lys-Gly) (interchain with G-Cter in SUMO1) linkage. The Ca(2+) site is built by Glu261, Met286, Gly288, and Gly290. Lys312 carries the N6-acetyllysine modification. Cys324 and Cys343 form a disulfide bridge. Residues Leu328, Glu330, and Thr331 each contribute to the Ca(2+) site. Lys332 participates in a covalent cross-link: Glycyl lysine isopeptide (Lys-Gly) (interchain with G-Cter in SUMO1). Residue Glu336 coordinates Ca(2+).

This sequence belongs to the annexin family. As to quaternary structure, homodimer; non-covalently linked. Homodimer; linked by transglutamylation. Homodimers linked by transglutamylation are observed in placenta, but not in other tissues. Interacts with S100A11. Heterotetramer, formed by two molecules each of S100A11 and ANXA1. Interacts with DYSF. Interacts with EGFR. Phosphorylated by protein kinase C, EGFR and TRPM7. Phosphorylated in response to EGF treatment. Post-translationally, sumoylated. In terms of processing, proteolytically cleaved by cathepsin CTSG to release the active N-terminal peptide Ac2-26.

It is found in the nucleus. Its subcellular location is the cytoplasm. It localises to the cell projection. The protein resides in the cilium. The protein localises to the basolateral cell membrane. It is found in the lateral cell membrane. Its subcellular location is the cell membrane. It localises to the apical cell membrane. The protein resides in the membrane. The protein localises to the early endosome. It is found in the cytoplasmic vesicle membrane. Its subcellular location is the endosome membrane. It localises to the secreted. The protein resides in the extracellular space. The protein localises to the extracellular exosome. It is found in the cytoplasmic vesicle. Its subcellular location is the secretory vesicle lumen. It localises to the phagocytic cup. Plays important roles in the innate immune response as effector of glucocorticoid-mediated responses and regulator of the inflammatory process. Has anti-inflammatory activity. Plays a role in glucocorticoid-mediated down-regulation of the early phase of the inflammatory response. Contributes to the adaptive immune response by enhancing signaling cascades that are triggered by T-cell activation, regulates differentiation and proliferation of activated T-cells. Promotes the differentiation of T-cells into Th1 cells and negatively regulates differentiation into Th2 cells. Has no effect on unstimulated T-cells. Negatively regulates hormone exocytosis via activation of the formyl peptide receptors and reorganization of the actin cytoskeleton. Has high affinity for Ca(2+) and can bind up to eight Ca(2+) ions. Displays Ca(2+)-dependent binding to phospholipid membranes. Plays a role in the formation of phagocytic cups and phagosomes. Plays a role in phagocytosis by mediating the Ca(2+)-dependent interaction between phagosomes and the actin cytoskeleton. In terms of biological role, functions at least in part by activating the formyl peptide receptors and downstream signaling cascades. Promotes chemotaxis of granulocytes and monocytes via activation of the formyl peptide receptors. Promotes rearrangement of the actin cytoskeleton, cell polarization and cell migration. Promotes resolution of inflammation and wound healing. Acts via neutrophil N-formyl peptide receptors to enhance the release of CXCL2. The sequence is that of Annexin A1 (ANXA1) from Pan troglodytes (Chimpanzee).